A 92-amino-acid chain; its full sequence is Small ribosomal subunit protein bS20 (92 aa).

Basic and acidic residues predominate over residues 1–21 (MPLHKSAEKRLRQAARRNERN). Disordered regions lie at residues 1–26 (MPLH…ARKK) and 73–92 (ASRK…PTAS). The span at 82 to 92 (KALNNYTPTAS) shows a compositional bias: polar residues.

It belongs to the bacterial ribosomal protein bS20 family.

Binds directly to 16S ribosomal RNA. In Chlorobaculum tepidum (strain ATCC 49652 / DSM 12025 / NBRC 103806 / TLS) (Chlorobium tepidum), this protein is Small ribosomal subunit protein bS20.